Reading from the N-terminus, the 374-residue chain is UPF0754 membrane protein SAS1767 (374 aa).

Transmembrane regions (helical) follow at residues 4–24 (LFII…TNVI) and 354–374 (SLGF…AIFV).

It belongs to the UPF0754 family.

Its subcellular location is the cell membrane. The sequence is that of UPF0754 membrane protein SAS1767 from Staphylococcus aureus (strain MSSA476).